The chain runs to 69 residues: Large ribosomal subunit protein bL31 (69 aa).

The Zn(2+) site is built by Cys-16, Cys-18, Cys-37, and Cys-40.

The protein belongs to the bacterial ribosomal protein bL31 family. Type A subfamily. As to quaternary structure, part of the 50S ribosomal subunit. The cofactor is Zn(2+).

In terms of biological role, binds the 23S rRNA. This is Large ribosomal subunit protein bL31 from Buchnera aphidicola subsp. Baizongia pistaciae (strain Bp).